The following is a 68-amino-acid chain: Small proline-rich protein 2K (68 aa).

One copy of the 1; truncated repeat lies at Pro21–Pro26. A 3.5 X 9 AA approximate tandem repeats region spans residues Pro21–Ser65. A run of 3 repeats spans residues Pro27–Pro35, Pro36–Pro44, and Gln45–Pro53.

Belongs to the cornifin (SPRR) family. Not expressed in uterus.

The protein resides in the cytoplasm. Cross-linked envelope protein of keratinocytes. It is a keratinocyte protein that first appears in the cell cytosol, but ultimately becomes cross-linked to membrane proteins by transglutaminase. All that results in the formation of an insoluble envelope beneath the plasma membrane. The protein is Small proline-rich protein 2K (Sprr2k) of Mus musculus (Mouse).